Consider the following 643-residue polypeptide: MNANPKFLSADARVDAAAVAPLPNSRKVYVTGSQPDIRVPMREITQADTPTSFGGEKNPPIYVYDTSGPYTDPDAKIDIRAGLPALRQRWIDARGDTETLSGLTSDYGRERAADPATAELRFPGLHRHPRRAKAGKNVTQMHYARQGIITPEMEYIAIRENQRRAEYLESLKASGPNGAKLAAMMGRQHAGQAFGAAAFGANAPAEITPEFVRDEVARGRAIIPANINHPETEPMIIGRNFLVKINANIGNSAVTSSIGEEVDKMTWAIRWGGDTVMDLSTGKHIHETREWIIRNSPVPIGTVPIYQALEKVNGKAEDLTWEIFRDTLIEQAEQGVDYFTIHAGVRLQYVPLTANRMTGIVSRGGSIMAKWCLAHHKESFLYEHFEEICEIMKAYDVSFSLGDGLRPGSIYDANDEAQLGELKTLGELTQIAWKHDVQVMIEGPGHVPMQLIKENMDLQLDWCKEAPFYTLGPLTTDIAPGYDHITSGIGAAMIGWFGTAMLCYVTPKEHLGLPNKDDVKEGIITYKLAAHAADLAKGHPGAQVRDNALSKARFEFRWQDQFNLGLDPDKAREFHDETLPKDSAKVAHFCSMCGPHFCSMKITQDVREFAAQQGVSENDALKKGMEVKAVEFVKSGSEIYHRQ.

Substrate is bound by residues N248, M277, Y306, H342, 362–364 (SRG), 403–406 (DGLR), and E442. H446 is a Zn(2+) binding site. Substrate is bound at residue Y469. A Zn(2+)-binding site is contributed by H510. [4Fe-4S] cluster contacts are provided by C590, C593, and C598.

This sequence belongs to the ThiC family. As to quaternary structure, homodimer. It depends on [4Fe-4S] cluster as a cofactor.

The catalysed reaction is 5-amino-1-(5-phospho-beta-D-ribosyl)imidazole + S-adenosyl-L-methionine = 4-amino-2-methyl-5-(phosphooxymethyl)pyrimidine + CO + 5'-deoxyadenosine + formate + L-methionine + 3 H(+). It functions in the pathway cofactor biosynthesis; thiamine diphosphate biosynthesis. Catalyzes the synthesis of the hydroxymethylpyrimidine phosphate (HMP-P) moiety of thiamine from aminoimidazole ribotide (AIR) in a radical S-adenosyl-L-methionine (SAM)-dependent reaction. This Burkholderia mallei (strain NCTC 10247) protein is Phosphomethylpyrimidine synthase.